The following is a 794-amino-acid chain: Transcription factor TOG1 (794 aa).

C18, C21, C28, C34, C37, and C44 together coordinate Zn(2+). A DNA-binding region (zn(2)-C6 fungal-type) is located at residues 18-44; it reads CDRCHRKKIKCNSKKPCFGCIGSQSKC.

Its subcellular location is the nucleus. In terms of biological role, transcriptional activator required for growth on non-fermentable carbon sources and that regulates genes involved in fatty acid utilization. Acts as a direct activator that binds the promoters of oleate utilizing genes, encoded key enzymes in beta-oxidation and NADPH regeneration (POX1, FOX2,POT1 and IDP2), the glyoxylate shunt (MLS1 and ICL1), and gluconeogenesis (PCK1 and FBP1). Also regulates the abundance of peroxisomes that are vital for fatty acid oxidation. This Saccharomyces cerevisiae (strain ATCC 204508 / S288c) (Baker's yeast) protein is Transcription factor TOG1.